Consider the following 148-residue polypeptide: MF7 protein (148 aa).

This chain is MF7 protein, found in Myxoma virus (strain Lausanne) (MYXV).